Consider the following 105-residue polypeptide: Ferredoxin (105 aa).

[3Fe-4S] cluster contacts are provided by C8 and C16. [4Fe-4S] cluster is bound by residues C20, C39, C42, and C45. Positions 30–59 (RSLYIHPDECVDCGACEPVCPVEAIFYEDD) constitute a 4Fe-4S ferredoxin-type domain. C49 lines the [3Fe-4S] cluster pocket.

The cofactor is [4Fe-4S] cluster. [3Fe-4S] cluster serves as cofactor.

Its function is as follows. Ferredoxins are iron-sulfur proteins that transfer electrons in a wide variety of metabolic reactions. Functionally, putative electron transport protein for the cytochrome P-450SOY system from the same organism. The protein is Ferredoxin of Streptomyces griseus.